The sequence spans 637 residues: DNA mismatch repair protein MutL (637 aa).

The protein belongs to the DNA mismatch repair MutL/HexB family.

This protein is involved in the repair of mismatches in DNA. It is required for dam-dependent methyl-directed DNA mismatch repair. May act as a 'molecular matchmaker', a protein that promotes the formation of a stable complex between two or more DNA-binding proteins in an ATP-dependent manner without itself being part of a final effector complex. In Actinobacillus succinogenes (strain ATCC 55618 / DSM 22257 / CCUG 43843 / 130Z), this protein is DNA mismatch repair protein MutL.